Reading from the N-terminus, the 499-residue chain is Lysine--tRNA ligase (499 aa).

Mg(2+) contacts are provided by Glu-409 and Glu-416.

Belongs to the class-II aminoacyl-tRNA synthetase family. Homodimer. The cofactor is Mg(2+).

It localises to the cytoplasm. It catalyses the reaction tRNA(Lys) + L-lysine + ATP = L-lysyl-tRNA(Lys) + AMP + diphosphate. This is Lysine--tRNA ligase from Pseudomonas fluorescens (strain Pf0-1).